A 1489-amino-acid polypeptide reads, in one-letter code: ABC transporter FUM19 (1489 aa).

10 helical membrane passes run 33-53, 84-104, 116-136, 143-163, 264-284, 302-322, 373-393, 397-417, 482-502, and 511-531; these read IIFF…RIFV, CFSS…ALSY, LLSI…RTLW, LEYG…FAVW, LLLP…QAFL, WGLI…TSLY, FLNL…AWFL, VGIA…GVSI, IASL…MLAA, and HKVY…GSIF. The 268-residue stretch at 272–539 folds into the ABC transmembrane type-1 1 domain; the sequence is IALIGLSLAQ…IFRSVSPLMS (268 aa). The 233-residue stretch at 591 to 823 folds into the ABC transporter 1 domain; sequence VKVIQASFGW…YQSHLQSLCI (233 aa). N-linked (GlcNAc...) asparagine glycosylation is found at asparagine 612 and asparagine 616. 625–632 contributes to the ATP binding site; sequence GPVGSGKS. Asparagine 670 carries N-linked (GlcNAc...) asparagine glycosylation. The span at 852-862 shows a compositional bias: basic and acidic residues; sequence EQTRSSRRGAD. The tract at residues 852–874 is disordered; it reads EQTRSSRRGADNQETIASGADSS. Residues 863 to 874 are compositionally biased toward polar residues; the sequence is NQETIASGADSS. 6 consecutive transmembrane segments (helical) span residues 890–910, 945–965, 977–999, 1031–1051, 1120–1140, and 1149–1169; these read AVPP…GFLY, ILAL…FALI, AITR…NYFS, AASS…LYFV, WLLF…VALV, and GFAG…TNVV. The ABC transmembrane type-1 2 domain maps to 902–1187; the sequence is SSLSYGFLYS…SMGAVSRLKA (286 aa). The 272-residue stretch at 1214–1485 folds into the ABC transporter 2 domain; the sequence is IKIDGVSASY…KEGKFRALWE (272 aa). 1254–1261 is an ATP binding site; the sequence is GRTGSGKS.

This sequence belongs to the ABC transporter superfamily. ABCC family. Conjugate transporter (TC 3.A.1.208) subfamily.

Its subcellular location is the cell membrane. In terms of biological role, ABC transporter that may provide the dual role of fumonisin export and self-protection by allowing the fungus to evade the harmful effect of its own fumonisin production. Plays a role in the repression of the gene cluster that mediates fumonisin biosynthesis. In Gibberella moniliformis (strain M3125 / FGSC 7600) (Maize ear and stalk rot fungus), this protein is ABC transporter FUM19.